Reading from the N-terminus, the 751-residue chain is Catalase-peroxidase (751 aa).

A disordered region spans residues 1–24; the sequence is MADKCPFHNQAPKPNVAGSGTQNR. The tryptophyl-tyrosyl-methioninium (Trp-Tyr) (with M-267) cross-link spans 95–241; the sequence is WHSAGTYRTF…LAAAHMGLIY (147 aa). The active-site Proton acceptor is the H96. The segment at residues 241–267 is a cross-link (tryptophyl-tyrosyl-methioninium (Tyr-Met) (with W-95)); that stretch reads YVNPEGPDGNPDPVAAARDIRTTFARM. H282 contributes to the heme b binding site.

It belongs to the peroxidase family. Peroxidase/catalase subfamily. Homodimer or homotetramer. Heme b is required as a cofactor. Formation of the three residue Trp-Tyr-Met cross-link is important for the catalase, but not the peroxidase activity of the enzyme.

It is found in the cytoplasm. It carries out the reaction H2O2 + AH2 = A + 2 H2O. The catalysed reaction is 2 H2O2 = O2 + 2 H2O. In terms of biological role, bifunctional enzyme with both catalase and broad-spectrum peroxidase activity. The chain is Catalase-peroxidase from Aspergillus oryzae (strain ATCC 42149 / RIB 40) (Yellow koji mold).